The chain runs to 207 residues: Holliday junction branch migration complex subunit RuvA (207 aa).

The segment at 1 to 64 (MIGRLTGILA…ETSQQLFGFS (64 aa)) is domain I. The tract at residues 65–142 (SQQDRELFRM…ALDTTPSEHS (78 aa)) is domain II. Residues 143-157 (PTGEGAGIVRVDPVI) are flexible linker. The tract at residues 158-207 (NTNVIIADAESALIGLGYKPTEAAKAVSAAYNDTITTSEDLIRAALKGMI) is domain III.

It belongs to the RuvA family. Homotetramer. Forms an RuvA(8)-RuvB(12)-Holliday junction (HJ) complex. HJ DNA is sandwiched between 2 RuvA tetramers; dsDNA enters through RuvA and exits via RuvB. An RuvB hexamer assembles on each DNA strand where it exits the tetramer. Each RuvB hexamer is contacted by two RuvA subunits (via domain III) on 2 adjacent RuvB subunits; this complex drives branch migration. In the full resolvosome a probable DNA-RuvA(4)-RuvB(12)-RuvC(2) complex forms which resolves the HJ.

The protein resides in the cytoplasm. Its function is as follows. The RuvA-RuvB-RuvC complex processes Holliday junction (HJ) DNA during genetic recombination and DNA repair, while the RuvA-RuvB complex plays an important role in the rescue of blocked DNA replication forks via replication fork reversal (RFR). RuvA specifically binds to HJ cruciform DNA, conferring on it an open structure. The RuvB hexamer acts as an ATP-dependent pump, pulling dsDNA into and through the RuvAB complex. HJ branch migration allows RuvC to scan DNA until it finds its consensus sequence, where it cleaves and resolves the cruciform DNA. This chain is Holliday junction branch migration complex subunit RuvA, found in Saccharophagus degradans (strain 2-40 / ATCC 43961 / DSM 17024).